Consider the following 404-residue polypeptide: Ubiquitin-like modifier-activating enzyme 5 (404 aa).

Gly-83, Asp-104, Lys-127, Asn-150, and Asn-184 together coordinate ATP. Cys-226 and Cys-229 together coordinate Zn(2+). Catalysis depends on Cys-250, which acts as the Glycyl thioester intermediate. Residues Cys-303 and Cys-308 each coordinate Zn(2+). The interval 372 to 393 (APEKSSETSEETVTAATADETS) is disordered. Low complexity predominate over residues 382–391 (ETVTAATADE).

Belongs to the ubiquitin-activating E1 family. UBA5 subfamily.

E1-like enzyme which activates UFM1. The protein is Ubiquitin-like modifier-activating enzyme 5 of Drosophila sechellia (Fruit fly).